A 546-amino-acid polypeptide reads, in one-letter code: Chaperonin GroEL (546 aa).

Residues 30–33, Lys51, 87–91, Gly415, and Asp495 each bind ATP; these read TLGP and DGTTT.

It belongs to the chaperonin (HSP60) family. In terms of assembly, forms a cylinder of 14 subunits composed of two heptameric rings stacked back-to-back. Interacts with the co-chaperonin GroES.

The protein resides in the cytoplasm. It carries out the reaction ATP + H2O + a folded polypeptide = ADP + phosphate + an unfolded polypeptide.. In terms of biological role, together with its co-chaperonin GroES, plays an essential role in assisting protein folding. The GroEL-GroES system forms a nano-cage that allows encapsulation of the non-native substrate proteins and provides a physical environment optimized to promote and accelerate protein folding. The sequence is that of Chaperonin GroEL from Brucella anthropi (strain ATCC 49188 / DSM 6882 / CCUG 24695 / JCM 21032 / LMG 3331 / NBRC 15819 / NCTC 12168 / Alc 37) (Ochrobactrum anthropi).